We begin with the raw amino-acid sequence, 404 residues long: Ethanolamine-phosphate cytidylyltransferase (404 aa).

Positions 173–201 (YADSFGKPPHPTPAGDTLSSEVSSQCPGG) are disordered. Over residues 189-201 (TLSSEVSSQCPGG) the composition is skewed to polar residues. CTP contacts are provided by residues 239–240 (AF), 247–250 (HVDF), lysine 277, 325–328 (HGKT), and 354–358 (SGSDL). Serine 356 bears the Phosphoserine mark. A phosphothreonine mark is found at threonine 359 and threonine 360.

It belongs to the cytidylyltransferase family.

It carries out the reaction phosphoethanolamine + CTP + H(+) = CDP-ethanolamine + diphosphate. Its pathway is phospholipid metabolism; phosphatidylethanolamine biosynthesis; phosphatidylethanolamine from ethanolamine: step 2/3. In terms of biological role, ethanolamine-phosphate cytidylyltransferase that catalyzes the second step in the synthesis of phosphatidylethanolamine (PE) from ethanolamine via the CDP-ethanolamine pathway. Phosphatidylethanolamine is a dominant inner-leaflet phospholipid in cell membranes, where it plays a role in membrane function by structurally stabilizing membrane-anchored proteins, and participates in important cellular processes such as cell division, cell fusion, blood coagulation, and apoptosis. The sequence is that of Ethanolamine-phosphate cytidylyltransferase (Pcyt2) from Mus musculus (Mouse).